The primary structure comprises 259 residues: uncharacterized protein (259 aa).

Belongs to the BtpA family.

This is an uncharacterized protein from Pyrococcus horikoshii (strain ATCC 700860 / DSM 12428 / JCM 9974 / NBRC 100139 / OT-3).